Consider the following 142-residue polypeptide: Mitochondrial import receptor subunit TOM22 homolog (142 aa).

Residues 1 to 18 (MAAAVAAAGAGEPLSPEE) show a composition bias toward low complexity. The segment at 1 to 41 (MAAAVAAAGAGEPLSPEELLPKAEAEKAEEELEEDDDDELD) is disordered. At Ala-2 the chain carries N-acetylalanine. Over 2 to 83 (AAAVAAAGAG…AQKMYRFSRA (82 aa)) the chain is Cytoplasmic. At Ser-15 the chain carries Phosphoserine. Residues 27–41 (KAEEELEEDDDDELD) are compositionally biased toward acidic residues. Residues 41-50 (DETLSERLWG) form an import sequence; necessary for mitochondrion outer membrane localization and integration in the TOM complex region. Position 43 is a phosphothreonine (Thr-43). At Ser-45 the chain carries Phosphoserine. The segment at 83–103 (AALWIGTTSFMILVLPVVFET) is TMD; necessary for mitochondrion outer membrane localization and integration in the TOM complex. Residues 84–103 (ALWIGTTSFMILVLPVVFET) traverse the membrane as a helical segment. At 104–142 (EKLQMEQQQQLQQRQILLGPNTGLSGGMPGALPPLPGKM) the chain is on the mitochondrial intermembrane side. The segment at 123 to 142 (PNTGLSGGMPGALPPLPGKM) is C-tail signal; necessary for mitochondrion outer membrane localization and integration in the TOM complex.

It belongs to the Tom22 family. As to quaternary structure, forms part of the preprotein translocase complex of the outer mitochondrial membrane (TOM complex) which consists of at least 7 different proteins (TOMM5, TOMM6, TOMM7, TOMM20, TOMM22, TOMM40 and TOMM70). Interacts with PPP2R2B and TOMM40.

It is found in the mitochondrion outer membrane. Functionally, central receptor component of the translocase of the outer membrane of mitochondria (TOM complex) responsible for the recognition and translocation of cytosolically synthesized mitochondrial preproteins. Together with the peripheral receptor TOM20 functions as the transit peptide receptor and facilitates the movement of preproteins into the translocation pore. Required for the translocation across the mitochondrial outer membrane of cytochrome P450 monooxygenases. The chain is Mitochondrial import receptor subunit TOM22 homolog (Tomm22) from Mus musculus (Mouse).